Consider the following 424-residue polypeptide: Protein arginine N-methyltransferase 2 (424 aa).

2 disordered regions span residues 67–89 and 151–212; these read DEAQ…EQKS and YEPL…SSRY. Over residues 71–89 the composition is skewed to polar residues; the sequence is TETNGVNGETSSASTEQKS. 2 stretches are compositionally biased toward low complexity: residues 163–173 and 187–201; these read TGQGEDAANEP and ETTA…ASTE. Positions 205-424 constitute an RMT2 domain; that stretch reads PDVTSSRYLD…YRLPLCKFMD (220 aa). S-adenosyl-L-methionine contacts are provided by residues tyrosine 212, methionine 241, 261 to 266, 282 to 284, 309 to 310, and aspartate 329; these read HGMGIV, EAH, and WQ.

The protein belongs to the class I-like SAM-binding methyltransferase superfamily. RMT2 methyltransferase family. Monomer.

It is found in the cytoplasm. The protein localises to the nucleus. Functionally, S-adenosyl-L-methionine-dependent protein-arginine N-methyltransferase that methylates the delta-nitrogen atom of arginine residues to form N5-methylarginine (type IV) in target proteins. Monomethylates ribosomal protein L12. The chain is Protein arginine N-methyltransferase 2 from Aspergillus fumigatus (strain ATCC MYA-4609 / CBS 101355 / FGSC A1100 / Af293) (Neosartorya fumigata).